The primary structure comprises 118 residues: Vesicle-associated membrane protein 1 (118 aa).

Residues 1-15 show a composition bias toward low complexity; it reads MSAPAQPPAEGTEGA. The tract at residues 1–36 is disordered; the sequence is MSAPAQPPAEGTEGAAPGGGPPGPPPNMTSNRRLQQ. The Cytoplasmic portion of the chain corresponds to 1-96; that stretch reads MSAPAQPPAE…KRKYWWKNCK (96 aa). The v-SNARE coiled-coil homology domain occupies 33–93; it reads RLQQTQAQVE…AKLKRKYWWK (61 aa). Phosphoserine is present on Ser-63. The helical; Anchor for type IV membrane protein transmembrane segment at 97–116 threads the bilayer; that stretch reads MMIMLGAICAIIVVVIVIYF. Topologically, residues 117-118 are vesicular; it reads FT.

It belongs to the synaptobrevin family. Interacts with VAPA and VAPB. In terms of processing, (Microbial infection) Targeted and hydrolyzed by C.botulinum neurotoxin type X (BoNT/X) which hydrolyzes the 68-Arg-|-Ala-69 bond and probably inhibits neurotransmitter release. It remains unknown whether BoNT/X is ever produced, or what organisms it targets. In terms of tissue distribution, highly expressed in the zona incerta and rostral periolivary region of the brain. Other neuroanatomical regions show negligible expression. Expressed in the retina, expression observed in the outer segments of the photoreceptors, in the outer and inner plexiform layers, and in a subset of ganglion cells.

It is found in the cytoplasmic vesicle. It localises to the secretory vesicle. The protein resides in the synaptic vesicle membrane. Its subcellular location is the synapse. The protein localises to the synaptosome. It is found in the cytoplasmic vesicle membrane. Involved in the targeting and/or fusion of transport vesicles to their target membrane. The chain is Vesicle-associated membrane protein 1 (Vamp1) from Mus musculus (Mouse).